The chain runs to 462 residues: MDKLTFPIFPAADLVNFFRQNILTGTEAKNFNKNDIFPNPKPEMVQKLYMRILQQVFNYGVEQFYMVPMDLDIQYPHLVEGFAPVANILKLMARFLPMCRVYDFHPSDVLNPKGKRTLHSLSGIVNFLHFSATRKEVYFEYCSSYKSALENVRQLQKANQEAEIKIEKLTTVPPEQQAEFKALSSEIHDLQQIISQEYRAKDVAFQEKIAQRKTEFAEKNKRLNEQKLAIATMKEEQERMKSQIVESPEQRKSKTERMKETVHRLKQARQETNDKCDYYRDRVAFACMWQTDVQGYLKKLQGIDTNLEIHRKIREEIRHSEEQVVNLNLELKSLSNEDAQLKRIILVKKEKLAKVDIKNKKKQEDFNQQKQEILEVCSRIQEKRQVVHGRVAQVLQEIQQTIGKKEQLLETTEAGKKKCQEVITDFRAALEKYHDSLQKASERSADRRREKIAELNRRLSRR.

Coiled-coil stretches lie at residues 143–277 (SSYK…DKCD) and 308–461 (EIHR…RLSR). The tract at residues 239 to 259 (RMKSQIVESPEQRKSKTERMK) is disordered. Residues 248–259 (PEQRKSKTERMK) are compositionally biased toward basic and acidic residues.

This sequence belongs to the NUF2 family. In terms of assembly, component of the NDC80 complex, which is composed of ndc80, cdca1, spbc24 and spbc25. The NDC80 complex interacts with mis12 and zwint.

It localises to the nucleus. It is found in the chromosome. The protein localises to the centromere. The protein resides in the kinetochore. Functionally, acts as a component of the essential kinetochore-associated NDC80 complex, which is required for chromosome segregation and spindle checkpoint activity. Required for kinetochore integrity and the organization of stable microtubule binding sites in the outer plate of the kinetochore. The NDC80 complex synergistically enhances the affinity of the SKA1 complex for microtubules and may allow the NDC80 complex to track depolymerizing microtubules. This is Kinetochore protein Nuf2-A (nuf2-a) from Xenopus laevis (African clawed frog).